The following is an 880-amino-acid chain: Alanine--tRNA ligase (880 aa).

The Zn(2+) site is built by His567, His571, Cys669, and His673.

It belongs to the class-II aminoacyl-tRNA synthetase family. Requires Zn(2+) as cofactor.

It localises to the cytoplasm. The catalysed reaction is tRNA(Ala) + L-alanine + ATP = L-alanyl-tRNA(Ala) + AMP + diphosphate. Its function is as follows. Catalyzes the attachment of alanine to tRNA(Ala) in a two-step reaction: alanine is first activated by ATP to form Ala-AMP and then transferred to the acceptor end of tRNA(Ala). Also edits incorrectly charged Ser-tRNA(Ala) and Gly-tRNA(Ala) via its editing domain. The polypeptide is Alanine--tRNA ligase (Bacillus mycoides (strain KBAB4) (Bacillus weihenstephanensis)).